The sequence spans 42 residues: Large ribosomal subunit protein bL36 (42 aa).

This sequence belongs to the bacterial ribosomal protein bL36 family.

The sequence is that of Large ribosomal subunit protein bL36 from Ehrlichia chaffeensis (strain ATCC CRL-10679 / Arkansas).